A 305-amino-acid chain; its full sequence is DNA-directed RNA polymerase 35 kDa subunit (305 aa).

Belongs to the poxviridae DNA-directed RNA polymerase 35 kDa subunit family. The DNA-dependent RNA polymerase used for intermediate and late genes expression consists of eight subunits 147 kDa, 133 kDa, 35 kDa, 30 kDa, 22 kDa, 19 kDa, 18 kDa and 7 kDa totalling more than 500 kDa in mass. The same holoenzyme, with the addition of the transcription-specificity factor RAP94, is used for early gene expression.

The protein localises to the virion. It catalyses the reaction RNA(n) + a ribonucleoside 5'-triphosphate = RNA(n+1) + diphosphate. In terms of biological role, part of the DNA-dependent RNA polymerase which catalyzes the transcription of viral DNA into RNA using the four ribonucleoside triphosphates as substrates. Responsible for the transcription of early, intermediate and late genes. DNA-dependent RNA polymerase associates with the early transcription factor (ETF), itself composed of D6 and A7, thereby allowing the early genes transcription. Late transcription, and probably also intermediate transcription, require newly synthesized RNA polymerase. The chain is DNA-directed RNA polymerase 35 kDa subunit (OPG156) from Cynomys gunnisoni (Gunnison's prairie dog).